Reading from the N-terminus, the 4303-residue chain is Polycystin-1 (4303 aa).

A signal peptide spans 1 to 23; it reads MPPAAPARLALALGLGLWLGALA. The 44-residue stretch at 24–67 folds into the LRRNT domain; sequence GGPGRGCGPCEPPCLCGPAPGAACRVNCSGRGLRTLGPALRIPA. The Extracellular portion of the chain corresponds to 24–3074; sequence GGPGRGCGPC…VFPEPTADVN (3051 aa). 2 N-linked (GlcNAc...) asparagine glycosylation sites follow: N50 and N89. LRR repeat units follow at residues 68-91 and 92-113; these read DATA…ANLS and ALAE…IFAN. N116 and N121 each carry an N-linked (GlcNAc...) asparagine glycan. Residues 125–178 enclose the LRRCT domain; sequence NPFECDCGLAWLPRWAEEQQVRVVQPEAATCAGPGSLAGQPLLGIPLLDSGCGE. The 95-residue stretch at 177 to 271 folds into the WSC domain; that stretch reads GEEYVACLPD…PTLLQHVFPA (95 aa). N187 carries an N-linked (GlcNAc...) asparagine glycan. Positions 272 to 359 constitute a PKD 1 domain; it reads SPGATLVGPH…VQVEAAPAAL (88 aa). The 117-residue stretch at 415–531 folds into the C-type lectin domain; the sequence is GNGHCYRLVV…CSAPHSYVCE (117 aa). 2 disulfide bridges follow: C436–C530 and C508–C522. The interval 616–635 is disordered; that stretch reads AGTPENGSEPESRSPDNRTQ. N-linked (GlcNAc...) asparagine glycans are attached at residues N621 and N632. An LDL-receptor class A; atypical domain is found at 638 to 671; it reads PACMPGGRWCPGANICLPLDASCHPQACANGCTS. 3 disulfide bridges follow: C640–C653, C647–C665, and C660–C669. Positions 743 to 817 constitute a PKD 2 domain; that stretch reads LSANASSWLP…RHNLSCSFDV (75 aa). N-linked (GlcNAc...) asparagine glycosylation is found at N746, N810, N841, N854, N890, N921, N1004, N1010, N1034, N1072, N1113, N1178, N1194, N1240, N1269, N1336, N1348, N1382, N1450, N1455, N1474, N1518, N1541, N1554, N1563, N1647, N1661, N1733, N1791, N1834, N1867, and N1880. 15 consecutive PKD domains span residues 855 to 928, 935 to 1020, 1023 to 1129, 1127 to 1215, 1213 to 1298, 1294 to 1383, 1382 to 1469, 1468 to 1551, 1550 to 1635, 1634 to 1721, 1719 to 1805, 1807 to 1890, 1889 to 1974, 1977 to 2057, and 2060 to 2148; these read ATAT…RVTA, LRAT…NRMQ, QVST…LPSV, PSVA…LRGL, RGLS…EVLR, LEVL…VGNV, NVTL…VLVT, VTSI…VRGL, GLVV…IEGL, GLQV…VGWL, GWLM…VSGL, IRAS…IVGL, GLVL…VSGL, PNCC…VLEV, and AVQY…ACRE. N-linked (GlcNAc...) asparagine glycosylation is found at N1991, N2050, N2074, N2125, N2248, N2353, N2395, N2412, N2567, N2578, N2645, N2718, N2754, N2841, N2878, N2925, N2956, and N2994. The region spanning 2146–2833 is the REJ domain; it reads CREPEVDVVL…QLIFLVDSNP (688 aa). The GAIN-B domain occupies 2862–3063; the sequence is PIERLASERA…SLFVPPSHVR (202 aa). A disulfide bridge links C3015 with C3043. Residues 3015-3063 are GPS; that stretch reads CQYFSEEDMVWRTEGLLPLEETSPRQAVCLTRHLTAFGASLFVPPSHVR. The helical transmembrane segment at 3075 to 3095 threads the bilayer; sequence YIVMLTCAVCLVTYMVMAAIL. At 3096–3277 the chain is on the cytoplasmic side; the sequence is HKLDQLDASR…DRPPRSRFTR (182 aa). One can recognise a PLAT domain in the interval 3118-3233; sequence FKYEILVKTG…EANGGLVEKE (116 aa). Residues 3278–3298 form a helical membrane-spanning segment; that stretch reads IQRATCCVLLICLFLGANAVW. The Extracellular portion of the chain corresponds to 3299–3323; sequence YGAVGDSAYSTGHVSRLSPLSVDTV. A helical transmembrane segment spans residues 3324–3344; the sequence is AVGLVSSVVVYPVYLAILFLF. At 3345–3559 the chain is on the cytoplasmic side; the sequence is RMSRSKVAGS…LPAWCASLAH (215 aa). Residues 3560–3580 form a helical membrane-spanning segment; the sequence is GLSLLLVAVAVAVSGWVGASF. Residues 3581–3582 lie on the Extracellular side of the membrane; that stretch reads PP. The chain crosses the membrane as a helical span at residues 3583-3603; the sequence is GVSVAWLLSSSASFLASFLGW. Topologically, residues 3604-3665 are cytoplasmic; it reads EPLKVLLEAL…LAKEEARKVK (62 aa). A helical transmembrane segment spans residues 3666 to 3686; sequence RLHGMLRSLLVYMLFLLVTLL. Residues 3687–3901 lie on the Extracellular side of the membrane; the sequence is ASYGDASCHG…RLSAGLSLPL (215 aa). N-linked (GlcNAc...) asparagine glycans are attached at residues N3738, N3790, and N3845. A helical transmembrane segment spans residues 3902–3922; that stretch reads LTSVCLLLFAVHFAVAEARTW. The Cytoplasmic portion of the chain corresponds to 3923-3935; it reads HREGRWRVLRLGA. Residues 3936 to 3956 form a helical membrane-spanning segment; sequence WARWLLVALTAATALVRLAQL. The Extracellular segment spans residues 3957-3984; the sequence is GAADRQWTRFVRGRPRRFTSFDQVAQLS. Residues 3985 to 4005 form a helical membrane-spanning segment; the sequence is SAARGLAASLLFLLLVKAAQQ. Residues 4006 to 4027 lie on the Cytoplasmic side of the membrane; that stretch reads LRFVRQWSVFGKTLCRALPELL. The helical transmembrane segment at 4028-4048 threads the bilayer; that stretch reads GVTLGLVVLGVAYAQLAILLV. Topologically, residues 4049 to 4090 are extracellular; sequence SSCVDSLWSVAQALLVLCPGTGLSTLCPAESWHLSPLLCVGL. A helical membrane pass occupies residues 4091 to 4110; sequence WALRLWGALRLGAVILRWRY. At 4111–4303 the chain is on the cytoplasmic side; sequence HALRGELYRP…AKNKVHPSST (193 aa). Disordered stretches follow at residues 4160 to 4196 and 4243 to 4303; these read PLPS…QLDG and LHSL…PSST. S4166 carries the phosphoserine; by PRKX; in vitro modification. Residues 4185 to 4195 show a composition bias toward polar residues; that stretch reads SHPSTSSSQLD. Residues 4220–4251 are a coiled coil; that stretch reads EALLTQFDRLNQATEDVYQLEQQLHSLQGRRS. Residues 4253–4269 are compositionally biased toward low complexity; sequence RAPAGSSRGPSPGLRPA. A compositionally biased stretch (basic residues) spans 4292–4303; the sequence is LRAKNKVHPSST.

This sequence belongs to the polycystin family. In terms of assembly, component of the heterotetrameric polycystin channel complex with PKD2; the tetramer contains one PKD1 chain and three PKD2 chains. Interacts with PKD2; the interaction is required for ciliary localization. Interacts with PKD2L1. Interacts with PRKX; involved in differentiation and controlled morphogenesis of the kidney. Interacts (via extracellular domain) with WNT3A, WNT4, WNT5A and WNT9B. Interacts with DVL1 and DVL2. Interacts with NPHP1 (via SH3 domain). Interacts with BBS1, BBS4, BBS5 and TTC8. Interacts with RGS7. Interacts (via the PKD repeats in the N-terminal extracellular region) with EPCIP; the interaction is not dependent on N-glycosylation of either protein. In terms of processing, N-glycosylated. Post-translationally, after synthesis, undergoes cleavage between Leu-3048 and Thr-3049 in the GPS region of the GAIN-B domain. Cleavage at the GPS region occurs through a cis-autoproteolytic mechanism involving an ester-intermediate via N-O acyl rearrangement. This process takes place in the early secretory pathway, depends on initial N-glycosylation, and requires the REJ domain. There is evidence that cleavage at GPS region is incomplete. Uncleaved and cleaved products may have different functions in vivo.

Its subcellular location is the cell membrane. The protein localises to the cell projection. It localises to the cilium. It is found in the endoplasmic reticulum. The protein resides in the golgi apparatus. Its subcellular location is the vesicle. The protein localises to the secreted. It localises to the extracellular exosome. In terms of biological role, component of a heteromeric calcium-permeable ion channel formed by PKD1 and PKD2 that is activated by interaction between PKD1 and a Wnt family member, such as WNT3A and WNT9B. Both PKD1 and PKD2 are required for channel activity. Involved in renal tubulogenesis. Involved in fluid-flow mechanosensation by the primary cilium in renal epithelium. Acts as a regulator of cilium length, together with PKD2. The dynamic control of cilium length is essential in the regulation of mechanotransductive signaling. The cilium length response creates a negative feedback loop whereby fluid shear-mediated deflection of the primary cilium, which decreases intracellular cAMP, leads to cilium shortening and thus decreases flow-induced signaling. May be an ion-channel regulator. Involved in adhesive protein-protein and protein-carbohydrate interactions. Likely to be involved with polycystin-1-interacting protein 1 in the detection, sequestration and exocytosis of senescent mitochondria. The protein is Polycystin-1 of Homo sapiens (Human).